Consider the following 448-residue polypeptide: MNDDDFGFSGIIKIANVSDFIAPSQACILPLQSKESDVEVQIRVRSRAKKVDDSAVKKVEVTLKDCLACSGCITSAETILIKEQSKPKFLEGLKKAQLSVMTVSPQSIASIAYKRGCHLSEAARLIARIFMNMGMKYVVDSSFGRLLTLSLSYDEFKESQLQRPIFTGVCPGFVCYAEKTHGTLLIPHISCVRSPQAMMGALVKDYLARKFNVRPEEIFHASVMPCFDKKLEAARSHSENHFNCREVDCVLSTGEVDAILDECSSTESFPVDGKVGWLNALENGKIISSEGGSSGGYAEYIVKRFVEESKTPLKLKRTIKDKNWEIIEAVDGETIVLSVAKCYGFRNIQNQVQKLKRSKCNYDYVEIMACPSGCINGGGQIRSASIEERKQLLDTIELPCSEDNSEMEEQLERVKEEWSILNPDWMNLLYTKYHAVVKSDADRISTNW.

8 residues coordinate [4Fe-4S] cluster: C27, C66, C69, C72, C170, C226, C370, and C374.

The protein belongs to the NARF family.

In terms of biological role, component of the cytosolic iron-sulfur (Fe/S) protein assembly machinery. Required for maturation of extramitochondrial Fe/S proteins. In Brugia malayi (Filarial nematode worm), this protein is Probable cytosolic Fe-S cluster assembly factor Bm6838.